The sequence spans 156 residues: Endogenous retrovirus group K member 6 Pro protein (156 aa).

Residues 21–96 (FEGLVDTGAD…IPLNLWGRDL (76 aa)) form the Peptidase A2 domain. Asp-26 is an active-site residue. The 46-residue stretch at 111-156 (YSPTSQKIMTKMGYIPGKGLGKNEDGIKIPVEAKINQEREGIGNPC) folds into the G-patch domain.

The protein belongs to the peptidase A2 family. HERV class-II K(HML-2) subfamily. In terms of assembly, active as a homodimer. Post-translationally, autoproteolytically processed at the N-terminus. Expected C-terminal autoprocessing not detected. The sequence shown is that of the processed Pro protein.

The catalysed reaction is Processing at the authentic HIV-1 PR recognition site and release of the mature p17 matrix and the p24 capsid protein, as a result of the cleavage of the -SQNY-|-PIVQ- cleavage site.. Functionally, retroviral proteases have roles in the processing of the primary translation products and the maturation of the viral particle. Endogenous Pro proteins may have kept, lost or modified their original function during evolution. The chain is Endogenous retrovirus group K member 6 Pro protein (ERVK-6) from Homo sapiens (Human).